We begin with the raw amino-acid sequence, 321 residues long: MVYLLAIIALLITFILVPVLIPTLKRMKFGQSIREEGPQSHMKKTGTPTMGGLTFLISIIITSILAIIFIDNSNPIILLLFVTIGFGLIGFIDDYIIVVKKNNQGLTSKQKFLAQIAIAVIFFILSQVFNLTDFSTGIHIPFINFEIPLSIAYVIFIVFWQVGFSNAVNLTDGLDGLATGLSIIGFVMYAIMAYFQGATSIGLFCIIMIFALLGFLPFNLNPAKVFMGDTGSLALGGIFATISIMLNQELSLLFIGFVFVAETLSVMIQVTSFKLTGKRIFKMSPLHHHFELVGWNETKVVTVFWTVGLITGLIGLWIGVS.

10 consecutive transmembrane segments (helical) span residues 1 to 21 (MVYL…PVLI), 50 to 70 (MGGL…IIFI), 76 to 96 (IILL…DDYI), 112 to 132 (FLAQ…FNLT), 140 to 160 (IPFI…IVFW), 173 to 193 (GLDG…AIMA), 198 to 218 (ATSI…FLPF), 225 to 245 (VFMG…ISIM), 250 to 270 (LSLL…MIQV), and 300 to 320 (VVTV…WIGV).

Belongs to the glycosyltransferase 4 family. MraY subfamily. Requires Mg(2+) as cofactor.

The protein resides in the cell membrane. The enzyme catalyses UDP-N-acetyl-alpha-D-muramoyl-L-alanyl-gamma-D-glutamyl-L-lysyl-D-alanyl-D-alanine + di-trans,octa-cis-undecaprenyl phosphate = Mur2Ac(oyl-L-Ala-gamma-D-Glu-L-Lys-D-Ala-D-Ala)-di-trans,octa-cis-undecaprenyl diphosphate + UMP. Its pathway is cell wall biogenesis; peptidoglycan biosynthesis. In terms of biological role, catalyzes the initial step of the lipid cycle reactions in the biosynthesis of the cell wall peptidoglycan: transfers peptidoglycan precursor phospho-MurNAc-pentapeptide from UDP-MurNAc-pentapeptide onto the lipid carrier undecaprenyl phosphate, yielding undecaprenyl-pyrophosphoryl-MurNAc-pentapeptide, known as lipid I. The sequence is that of Phospho-N-acetylmuramoyl-pentapeptide-transferase from Staphylococcus saprophyticus subsp. saprophyticus (strain ATCC 15305 / DSM 20229 / NCIMB 8711 / NCTC 7292 / S-41).